The following is a 459-amino-acid chain: Tubulin gamma chain (459 aa).

Residue 142–148 (AGGTGSG) coordinates GTP. Residues 440-459 (ADYLTKETAPTDEAEDKRAG) are disordered.

The protein belongs to the tubulin family.

Its subcellular location is the cytoplasm. The protein localises to the cytoskeleton. It localises to the microtubule organizing center. It is found in the spindle pole body. Its function is as follows. Tubulin is the major constituent of microtubules. The gamma chain is found at microtubule organizing centers (MTOC) such as the spindle poles or the centrosome, suggesting that it is involved in the minus-end nucleation of microtubule assembly. This is Tubulin gamma chain (TUB4) from Cochliobolus heterostrophus (strain C5 / ATCC 48332 / race O) (Southern corn leaf blight fungus).